The primary structure comprises 327 residues: GMP reductase (327 aa).

Residue cysteine 176 is the Thioimidate intermediate of the active site. Position 205–228 (205–228) interacts with NADP(+); that stretch reads IIADGGIRTHGDIAKSIRFGASMV.

It belongs to the IMPDH/GMPR family. GuaC type 2 subfamily.

It carries out the reaction IMP + NH4(+) + NADP(+) = GMP + NADPH + 2 H(+). Functionally, catalyzes the irreversible NADPH-dependent deamination of GMP to IMP. It functions in the conversion of nucleobase, nucleoside and nucleotide derivatives of G to A nucleotides, and in maintaining the intracellular balance of A and G nucleotides. In Streptococcus pyogenes serotype M28 (strain MGAS6180), this protein is GMP reductase.